A 129-amino-acid chain; its full sequence is Glycine cleavage system H protein (129 aa).

Residues 24–106 form the Lipoyl-binding domain; it reads LIRVGISAFA…HGAGWLLVVR (83 aa). Position 65 is an N6-lipoyllysine (Lys-65).

Belongs to the GcvH family. The glycine cleavage system is composed of four proteins: P, T, L and H. It depends on (R)-lipoate as a cofactor.

In terms of biological role, the glycine cleavage system catalyzes the degradation of glycine. The H protein shuttles the methylamine group of glycine from the P protein to the T protein. This chain is Glycine cleavage system H protein, found in Synechococcus sp. (strain CC9902).